The chain runs to 212 residues: Orotate phosphoribosyltransferase (212 aa).

K26 is a binding site for 5-phospho-alpha-D-ribose 1-diphosphate. Residue F34 to F35 coordinates orotate. 5-phospho-alpha-D-ribose 1-diphosphate contacts are provided by residues Y72–K73, R99, K100, K103, H105, and D124–A132. Positions 128 and 156 each coordinate orotate.

The protein belongs to the purine/pyrimidine phosphoribosyltransferase family. PyrE subfamily. In terms of assembly, homodimer. Mg(2+) serves as cofactor.

The enzyme catalyses orotidine 5'-phosphate + diphosphate = orotate + 5-phospho-alpha-D-ribose 1-diphosphate. It participates in pyrimidine metabolism; UMP biosynthesis via de novo pathway; UMP from orotate: step 1/2. Catalyzes the transfer of a ribosyl phosphate group from 5-phosphoribose 1-diphosphate to orotate, leading to the formation of orotidine monophosphate (OMP). This is Orotate phosphoribosyltransferase from Ruthia magnifica subsp. Calyptogena magnifica.